A 526-amino-acid chain; its full sequence is Cytochrome P450 monooxygenase BOT4 (526 aa).

Asparagine 5 carries an N-linked (GlcNAc...) asparagine glycan. The chain crosses the membrane as a helical span at residues 41–61; that stretch reads CLVAIILCRFIAVWSYNLWFH. 2 N-linked (GlcNAc...) asparagine glycosylation sites follow: asparagine 205 and asparagine 281. Residue cysteine 464 coordinates heme.

This sequence belongs to the cytochrome P450 family. Heme is required as a cofactor.

It localises to the membrane. The protein operates within secondary metabolite biosynthesis. Its function is as follows. Cytochrome P450 monooxygenase; part of the gene cluster that mediates the biosynthesis of botrydial. Botrydial is necessary for colonization of plant tissue by the T4 strain. It is a strain-dependent virulence factor since highly aggressive strains like SAS56 or B05 still retain substantial virulence when botrydial synthesis is impaired, since they produce also botcinic acid. The first step of botrydial biosynthesis is performed by the sesquiterpene synthase BOT2 which catalyzes the cyclization of farnesyl diphosphate (FPP) to presilphiperfolan-8-beta-ol (PSP). The cytochrome P450 monooxygenase BOT4 then catalyzes the hydroxylation at C-4 to give a probotryane intermediate. Acetylation of the hydroxyl at C-4 is carried out by the acetyltransferase BOT5, followed by the combined action of the P450 monooxygenases BOT3 and BOT1, to yield finally the glycol, via the regio- and stereospecific hydroxylations at C-10 and C-15 of the probotryane intermediates, respectively. The cleavage of the C10-C15 bond of probotryane skeleton is an intriguing and chemically important reaction, which could be mediated by some of the monooxygenases or by a combination of them. It is possible that either BOT3 or BOT1 would oxidize either the 10- or the 15-hydroxy group to the hydroperoxide derivative, which would then undergo heterolytic fragmentation to give the dialdehyde botrydial. Finally, the dehydrogenase BOT7 might be involved in the conversion of botrydial to dihydrobotrydial. In Botryotinia fuckeliana (Noble rot fungus), this protein is Cytochrome P450 monooxygenase BOT4.